Consider the following 379-residue polypeptide: Queuine tRNA-ribosyltransferase (379 aa).

D94 (proton acceptor) is an active-site residue. Substrate-binding positions include 94–98 (DSGGF), D148, Q191, and G218. Residues 249-255 (GVGSPDS) form an RNA binding region. The Nucleophile role is filled by D268. The segment at 273–277 (TRIAR) is RNA binding; important for wobble base 34 recognition. Zn(2+) is bound by residues C306, C308, C311, and H337.

It belongs to the queuine tRNA-ribosyltransferase family. Homodimer. Within each dimer, one monomer is responsible for RNA recognition and catalysis, while the other monomer binds to the replacement base PreQ1. The cofactor is Zn(2+).

It catalyses the reaction 7-aminomethyl-7-carbaguanine + guanosine(34) in tRNA = 7-aminomethyl-7-carbaguanosine(34) in tRNA + guanine. The protein operates within tRNA modification; tRNA-queuosine biosynthesis. Functionally, catalyzes the base-exchange of a guanine (G) residue with the queuine precursor 7-aminomethyl-7-deazaguanine (PreQ1) at position 34 (anticodon wobble position) in tRNAs with GU(N) anticodons (tRNA-Asp, -Asn, -His and -Tyr). Catalysis occurs through a double-displacement mechanism. The nucleophile active site attacks the C1' of nucleotide 34 to detach the guanine base from the RNA, forming a covalent enzyme-RNA intermediate. The proton acceptor active site deprotonates the incoming PreQ1, allowing a nucleophilic attack on the C1' of the ribose to form the product. After dissociation, two additional enzymatic reactions on the tRNA convert PreQ1 to queuine (Q), resulting in the hypermodified nucleoside queuosine (7-(((4,5-cis-dihydroxy-2-cyclopenten-1-yl)amino)methyl)-7-deazaguanosine). The sequence is that of Queuine tRNA-ribosyltransferase from Bacillus cereus (strain Q1).